We begin with the raw amino-acid sequence, 1341 residues long: DNA-directed RNA polymerase subunit beta (1341 aa).

The protein belongs to the RNA polymerase beta chain family. As to quaternary structure, the RNAP catalytic core consists of 2 alpha, 1 beta, 1 beta' and 1 omega subunit. When a sigma factor is associated with the core the holoenzyme is formed, which can initiate transcription.

It carries out the reaction RNA(n) + a ribonucleoside 5'-triphosphate = RNA(n+1) + diphosphate. Functionally, DNA-dependent RNA polymerase catalyzes the transcription of DNA into RNA using the four ribonucleoside triphosphates as substrates. This is DNA-directed RNA polymerase subunit beta from Blochmanniella pennsylvanica (strain BPEN).